Reading from the N-terminus, the 352-residue chain is uncharacterized protein (352 aa).

Positions 1–40 are disordered; that stretch reads MTSTMKLFTDHAEISVRERPPQRNNNNQEQDNSNRPAPRR. Residues 8 to 21 are compositionally biased toward basic and acidic residues; that stretch reads FTDHAEISVRERPP. Residues 22–36 show a composition bias toward low complexity; sequence QRNNNNQEQDNSNRP. The chain crosses the membrane as a helical span at residues 317–333; sequence MTITLPCGLTIAFFVYY.

It is found in the host cell membrane. This is an uncharacterized protein from Diadromus pulchellus idnoreovirus 1 (DpIRV-1).